The primary structure comprises 549 residues: Cation/acetate symporter ActP (549 aa).

The Periplasmic portion of the chain corresponds to 1–32; sequence MKRVLTALAATLPFAANAADAISGAVERQPTN. The helical transmembrane segment at 33-55 threads the bilayer; the sequence is WQAIIMFLIFVVFTLGITYWASK. The Cytoplasmic segment spans residues 56 to 75; that stretch reads RVRSRSDYYTAGGNITGFQN. The helical transmembrane segment at 76–98 threads the bilayer; that stretch reads GLAIAGDYMSAASFLGISALVFT. Residues 99–102 are Periplasmic-facing; that stretch reads SGYD. The helical transmembrane segment at 103–125 threads the bilayer; the sequence is GLIYSLGFLVGWPIILFLIAERL. At 126–145 the chain is on the cytoplasmic side; that stretch reads RNLGRYTSADVASYRLKQGP. The chain crosses the membrane as a helical span at residues 146-168; sequence IRILSACGSLVVVALYLIAQMVG. The Periplasmic segment spans residues 169-182; the sequence is AGKLIELLFGLNYH. A helical transmembrane segment spans residues 183–205; sequence IAVVLVGVLMMMYVLFGGMLATT. Residues 206–211 lie on the Cytoplasmic side of the membrane; that stretch reads WVQIIK. Residues 212 to 234 traverse the membrane as a helical segment; sequence AVLLLFGASFMAFMVMKHVGFSF. The Periplasmic portion of the chain corresponds to 235-260; that stretch reads NNLFSEAMAVHPKGVDIMKPGGLVKD. Residues 261 to 283 traverse the membrane as a helical segment; it reads PISALSLGLGLMFGTAGLPHILM. Over 284–302 the chain is Cytoplasmic; that stretch reads RFFTVSDAREARKSVFYAT. Residues 303 to 325 traverse the membrane as a helical segment; it reads GFMGYFYILTFIIGFGAIMLVGA. Residues 326 to 349 are Periplasmic-facing; it reads NPEYKDAAGHLIGGNNMAAVHLAN. Residues 350–372 traverse the membrane as a helical segment; the sequence is AVGGNLFLGFISAVAFATILAVV. The Cytoplasmic portion of the chain corresponds to 373 to 401; it reads ADLTLAGASAVSHDLYANVFKKGATEREE. A helical transmembrane segment spans residues 402–424; sequence LRVSKITVLILGVIAIILGVLFE. The Periplasmic portion of the chain corresponds to 425 to 427; sequence NQN. The chain crosses the membrane as a helical span at residues 428–450; sequence IAFMVGLAFAIAASCNFPIILLS. The Cytoplasmic segment spans residues 451–461; that stretch reads MYWSKLTTRGA. A helical membrane pass occupies residues 462-484; sequence MLGGWLGLITAVVLMILGPTIWV. Residues 485–493 are Periplasmic-facing; sequence QILGHEKAI. A helical transmembrane segment spans residues 494–516; sequence FPYEYPALFSISVAFLGIWFFSA. At 517 to 549 the chain is on the cytoplasmic side; sequence TDNSAEGARERELFRAQFIRSQTGFGVEQGRAH.

It belongs to the sodium:solute symporter (SSF) (TC 2.A.21) family.

It is found in the cell inner membrane. Transports acetate. The polypeptide is Cation/acetate symporter ActP (actP) (Shigella flexneri).